A 230-amino-acid chain; its full sequence is Sugar fermentation stimulation protein homolog (230 aa).

This sequence belongs to the SfsA family.

The chain is Sugar fermentation stimulation protein homolog from Clostridium botulinum (strain ATCC 19397 / Type A).